Here is a 1211-residue protein sequence, read N- to C-terminus: Transient receptor potential cation channel subfamily A member 1 homolog (1211 aa).

Residues 1-811 (MSKKSLGLDV…LKYKWNRLGR (811 aa)) lie on the Cytoplasmic side of the membrane. 17 ANK repeats span residues 49 to 79 (NLRS…AVNA), 83 to 112 (DFMT…LPNT), 116 to 169 (EGDT…EIDP), 173 to 202 (YQLT…DVDA), 206 to 235 (NKMT…NVTK), 239 to 270 (RLNT…AIKA), 277 to 306 (EKKT…KNSC), 311 to 340 (REKE…NKNE), 344 to 374 (VKAV…NIDV), 378 to 407 (QGLT…NLTI), 411 to 440 (DERT…KKNK), 473 to 502 (DQNT…SITQ), 506 to 535 (DEET…RLLL), 540 to 569 (MGNS…DKEA), 573 to 602 (YQKT…QIES), 605 to 634 (DTKT…TIDR), and 638 to 669 (EGKT…NLMI). The chain crosses the membrane as a helical span at residues 812–832 (PMYYFALFMYLVFIVSLTQYV). Topologically, residues 833–870 (RHTKAPYNVWNEESYYDSEYFDENETCPQINTTKPDVV) are extracellular. N-linked (GlcNAc...) asparagine glycosylation is found at Asn-856 and Asn-863. A helical membrane pass occupies residues 871 to 891 (WKIIIQTLAVCQILVECFQLF). Residues 892–894 (QRK) are Cytoplasmic-facing. The helical transmembrane segment at 895–915 (FAYLVNWENWIDCFIYSTALI) threads the bilayer. At 916-932 (TVYDFSECSATSGVRQN) the chain is on the extracellular side. The helical transmembrane segment at 933–953 (WQWILAALCIFFGWINLLFMI) threads the bilayer. Residues 954–975 (RKMPRFGIFVVMFVDIVKTFFR) are Cytoplasmic-facing. A helical membrane pass occupies residues 976-996 (FFPVFVLFIIAFSSSFYVILQ). The Extracellular segment spans residues 997-1004 (NRPEFSTI). An intramembrane region (pore-forming) is located at residues 1005–1025 (FMSPLKTTVMMIGEFEFTGIF). The Extracellular segment spans residues 1026–1048 (HGDETTHAEKMFGPAHTAVACAL). A helical transmembrane segment spans residues 1049 to 1069 (FFFFCIIMTILLMNLLVGLAV). Residues 1070-1193 (DDIKGVQEKA…EKQVRLEAII (124 aa)) are Cytoplasmic-facing. A coiled-coil region spans residues 1149 to 1191 (EMYEREAEFTSEMTQKLQNQAAKLKNIQENIDVMYEKQVRLEA).

This sequence belongs to the transient receptor (TC 1.A.4) family. In terms of assembly, homotetramer. As to expression, expressed in many sensory neurons, including OLQ and IL1 neurons.

It is found in the cell membrane. Receptor-activated non-selective cation channel involved in the nose-touch response and foraging behavior. Contributes to the neural responses of sensory neurons to touch, particularly after repeated mechanical stimulation. Has no apparent role in thermosensory or chemosensory behaviors. This chain is Transient receptor potential cation channel subfamily A member 1 homolog (trpa-1), found in Caenorhabditis elegans.